The chain runs to 249 residues: MGRGPVQLRRIENKINRQVTFSKRRNGLLKKAHEISVLCDADVALIVFSTKGKLYEFSSHSSMEGILERYQRYSFDERAVLEPNTEDQENWGDEYGILKSKLDALQKSQRQLLGEQLDTLTIKELQQLEHQLEYSLKHIRSKKNQLLFESISELQKKEKSLKNQNNVLQKLMETEKEKNNAIINTNREEQNGATPSTSSPTPVTAPDPIPTTNNSQSQPRGSGESEAQPSPAQAGNSKLPPWMLRTSHT.

The region spanning 1–61 (MGRGPVQLRR…GKLYEFSSHS (61 aa)) is the MADS-box domain. Residues 88–179 (QENWGDEYGI…KLMETEKEKN (92 aa)) enclose the K-box domain. The interval 184 to 249 (NTNREEQNGA…PPWMLRTSHT (66 aa)) is disordered. Polar residues predominate over residues 210–236 (PTTNNSQSQPRGSGESEAQPSPAQAGN).

Widely expressed. Transcripts accumulate to higher levels in organs that retain meristematic characteristics: in the apical meristem and in the meristematic leaf primordia formed on its flank; in the developing panicle at the early stage of rachis-branch primordia differentiation; in the procambium of the rachis branches and in all floral organ primordia.

It is found in the nucleus. In terms of biological role, probable transcription factor. The sequence is that of MADS-box transcription factor 18 (MADS18) from Oryza sativa subsp. indica (Rice).